A 732-amino-acid polypeptide reads, in one-letter code: Integrator complex subunit 13 (732 aa).

Positions 564–648 are enriched in basic and acidic residues; that stretch reads PPEEEERKKR…DETPHMEKSK (85 aa). Residues 564–650 form a disordered region; it reads PPEEEERKKR…TPHMEKSKGP (87 aa). The short motif at 572 to 582 is the Nuclear localization signal (NLS) element; it reads KRGRKREDRED. K611 participates in a covalent cross-link: Glycyl lysine isopeptide (Lys-Gly) (interchain with G-Cter in SUMO2). Phosphoserine is present on residues S623, S626, and S678. A cleavage module binding motif (CMBM) region spans residues 649 to 694; that stretch reads GPVSLLSLWSNRINTANSRKHQEFAGRLNSVNNRAELYQHLKEENG.

This sequence belongs to the Integrator subunit 13 family. Component of the Integrator complex, composed of core subunits INTS1, INTS2, INTS3, INTS4, INTS5, INTS6, INTS7, INTS8, INTS9/RC74, INTS10, INTS11/CPSF3L, INTS12, INTS13, INTS14 and INTS15. The core complex associates with protein phosphatase 2A subunits PPP2CA and PPP2R1A, to form the Integrator-PP2A (INTAC) complex. INTS13 is part of the tail subcomplex, composed of INTS10, INTS13, INTS14 and INTS15. Interacts with transcription factors ZNF609 and ZNF655. Interacts with PAFAH1B1; this interaction may be required for proper recruitment of dynein complexes to the nuclear envelope at prophase.

It localises to the nucleus. The protein resides in the cytoplasm. Its function is as follows. Component of the integrator complex, a multiprotein complex that terminates RNA polymerase II (Pol II) transcription in the promoter-proximal region of genes. The integrator complex provides a quality checkpoint during transcription elongation by driving premature transcription termination of transcripts that are unfavorably configured for transcriptional elongation: the complex terminates transcription by (1) catalyzing dephosphorylation of the C-terminal domain (CTD) of Pol II subunit POLR2A/RPB1 and SUPT5H/SPT5, (2) degrading the exiting nascent RNA transcript via endonuclease activity and (3) promoting the release of Pol II from bound DNA. The integrator complex is also involved in terminating the synthesis of non-coding Pol II transcripts, such as enhancer RNAs (eRNAs), small nuclear RNAs (snRNAs), telomerase RNAs and long non-coding RNAs (lncRNAs). Within the integrator complex, INTS13 is part of the integrator tail module and acts as a platform for the recruitment of transcription factors at promoters. At prophase, mediates recruitment of cytoplasmic dynein to the nuclear envelope, a step important for proper centrosome-nucleus coupling. At G2/M phase, may be required for proper spindle formation and execution of cytokinesis. In Mus musculus (Mouse), this protein is Integrator complex subunit 13.